A 98-amino-acid chain; its full sequence is UPF0251 protein SO_0727 (98 aa).

The protein belongs to the UPF0251 family.

The polypeptide is UPF0251 protein SO_0727 (Shewanella oneidensis (strain ATCC 700550 / JCM 31522 / CIP 106686 / LMG 19005 / NCIMB 14063 / MR-1)).